Consider the following 423-residue polypeptide: Endoplasmic reticulum junction formation protein lunapark (423 aa).

The Cytoplasmic portion of the chain corresponds to 1-45 (MGALLAKWRAKPSTVEVLEKMEKDIQSLEEFRDKNQKLRKIWVAR). Positions 16-40 (EVLEKMEKDIQSLEEFRDKNQKLRK) form a coiled coil. The helical transmembrane segment at 46–66 (LFFYSTILYILTSLTVYLWYL) threads the bilayer. The Lumenal portion of the chain corresponds to 67-77 (PDGMTARLLTM). Residues 78–98 (LLFLSFPVLIWFVRTLLILWF) form a helical membrane-spanning segment. Over 99–423 (SRRTERNNDA…ETEESFMETE (325 aa)) the chain is Cytoplasmic. Residues 101 to 128 (RTERNNDALELLKTEKKKILEEVMEKET) adopt a coiled-coil conformation. The disordered stretch occupies residues 147–169 (KELELPVPGPPITPRPGQDLRQR). A Phosphothreonine modification is found at Thr-159. Phosphoserine occurs at positions 177, 179, and 188. At Thr-198 the chain carries Phosphothreonine. The interval 200–247 (SLQRDTSAPGGPPERSVQPTPQSNILQRRPGSPATTVSGMAIHPPGPP) is disordered. Ser-206 and Ser-215 each carry phosphoserine. Residues 216–225 (VQPTPQSNIL) are compositionally biased toward polar residues. The residue at position 219 (Thr-219) is a Phosphothreonine. Phosphoserine is present on residues Ser-222 and Ser-231. A C4-type; plays a role in ER morphology zinc finger spans residues 280 to 305 (CQQCFSHNGMALKEEFEYVAFRCAYC). Positions 318–423 (APRLQEINFD…ETEESFMETE (106 aa)) are disordered. Residues 334–343 (DSQGSVSSVQ) show a composition bias toward polar residues. Composition is skewed to acidic residues over residues 370–391 (QAIE…DDSE) and 414–423 (ETEESFMETE).

The protein belongs to the lunapark family. Homodimer; homodimerization requires the C4-type zinc finger motif and decreases during mitosis in a phosphorylation-dependent manner. In terms of processing, phosphorylated. Phosphorylation at Thr-159 occurs during interphase. Phosphorylation at Ser-177, Ser-179, Ser-188, Thr-198, Ser-206, Ser-215, Thr-219, Ser-222 and Ser-231 occurs during mitosis; these phosphorylations reduce both its homodimerization and the ER three-way tubular junction formation.

It localises to the endoplasmic reticulum membrane. Functionally, endoplasmic reticulum (ER)-shaping membrane protein that plays a role in determining ER morphology. Involved in the stabilization of nascent three-way ER tubular junctions within the ER network. May also play a role as a curvature-stabilizing protein within three-way ER tubular junction network. This chain is Endoplasmic reticulum junction formation protein lunapark (lnpk), found in Xenopus tropicalis (Western clawed frog).